Here is a 415-residue protein sequence, read N- to C-terminus: Tyrosine--tRNA ligase (415 aa).

Positions 54–63 (PTGSNIHLGH) match the 'HIGH' region motif. The short motif at 248 to 252 (KMSKS) is the 'KMSKS' region element. Residue K251 participates in ATP binding. The region spanning 351–414 (AKAFYLFSAV…LGKKTFRRLV (64 aa)) is the S4 RNA-binding domain.

It belongs to the class-I aminoacyl-tRNA synthetase family. TyrS type 2 subfamily. In terms of assembly, homodimer.

Its subcellular location is the cytoplasm. It catalyses the reaction tRNA(Tyr) + L-tyrosine + ATP = L-tyrosyl-tRNA(Tyr) + AMP + diphosphate + H(+). Functionally, catalyzes the attachment of tyrosine to tRNA(Tyr) in a two-step reaction: tyrosine is first activated by ATP to form Tyr-AMP and then transferred to the acceptor end of tRNA(Tyr). This chain is Tyrosine--tRNA ligase, found in Synechococcus sp. (strain CC9605).